Reading from the N-terminus, the 688-residue chain is Potassium-transporting ATPase ATP-binding subunit (688 aa).

4 helical membrane passes run 35–55 (VMFVVYLGSGLTTILWIAMLA), 62–82 (ALFTGNIALWLWFTVLFANFA), 219–239 (IALTILLTALTIIFLLVCVTL), and 260–280 (VLIALLVCLIPTTIGGLLSAI). D313 functions as the 4-aspartylphosphate intermediate in the catalytic mechanism. ATP contacts are provided by residues D350, E354, 383–390 (FSAMTRMS), and K401. Mg(2+) contacts are provided by D524 and D528. Helical transmembrane passes span 594–614 (FAIIPAAFAVTYPQLNILNIM), 622–642 (AVLSTVIFNALIIVFLIPLAL), and 667–687 (GLIAPFIGIKLIDLLLTLLIL).

This sequence belongs to the cation transport ATPase (P-type) (TC 3.A.3) family. Type IA subfamily. As to quaternary structure, the system is composed of three essential subunits: KdpA, KdpB and KdpC.

It is found in the cell inner membrane. The enzyme catalyses K(+)(out) + ATP + H2O = K(+)(in) + ADP + phosphate + H(+). Part of the high-affinity ATP-driven potassium transport (or Kdp) system, which catalyzes the hydrolysis of ATP coupled with the electrogenic transport of potassium into the cytoplasm. This subunit is responsible for energy coupling to the transport system and for the release of the potassium ions to the cytoplasm. This is Potassium-transporting ATPase ATP-binding subunit from Photorhabdus laumondii subsp. laumondii (strain DSM 15139 / CIP 105565 / TT01) (Photorhabdus luminescens subsp. laumondii).